Consider the following 289-residue polypeptide: Diaminopimelate epimerase (289 aa).

Substrate contacts are provided by Asn13, Gln52, and Asn72. Cys81 functions as the Proton donor in the catalytic mechanism. Substrate is bound by residues 82-83 (GN), Asn167, Asn201, and 219-220 (ER). Cys228 functions as the Proton acceptor in the catalytic mechanism. Residue 229–230 (GT) coordinates substrate.

This sequence belongs to the diaminopimelate epimerase family. As to quaternary structure, homodimer.

It localises to the cytoplasm. The catalysed reaction is (2S,6S)-2,6-diaminopimelate = meso-2,6-diaminopimelate. The protein operates within amino-acid biosynthesis; L-lysine biosynthesis via DAP pathway; DL-2,6-diaminopimelate from LL-2,6-diaminopimelate: step 1/1. Catalyzes the stereoinversion of LL-2,6-diaminopimelate (L,L-DAP) to meso-diaminopimelate (meso-DAP), a precursor of L-lysine and an essential component of the bacterial peptidoglycan. The polypeptide is Diaminopimelate epimerase (Caulobacter sp. (strain K31)).